The chain runs to 299 residues: UDP-N-acetylenolpyruvoylglucosamine reductase (299 aa).

The region spanning 28–193 (KVGGPADILA…LSAKFELQAG (166 aa)) is the FAD-binding PCMH-type domain. R172 is an active-site residue. Catalysis depends on S222, which acts as the Proton donor. E292 is an active-site residue.

Requires FAD as cofactor.

Its subcellular location is the cytoplasm. The catalysed reaction is UDP-N-acetyl-alpha-D-muramate + NADP(+) = UDP-N-acetyl-3-O-(1-carboxyvinyl)-alpha-D-glucosamine + NADPH + H(+). It functions in the pathway cell wall biogenesis; peptidoglycan biosynthesis. Cell wall formation. In Lactococcus lactis subsp. cremoris (strain MG1363), this protein is UDP-N-acetylenolpyruvoylglucosamine reductase.